Consider the following 113-residue polypeptide: Hydrogenase maturation factor HypA (113 aa).

Histidine 2 lines the Ni(2+) pocket. Zn(2+) is bound by residues cysteine 73, cysteine 76, cysteine 89, and cysteine 92.

It belongs to the HypA/HybF family.

In terms of biological role, involved in the maturation of [NiFe] hydrogenases. Required for nickel insertion into the metal center of the hydrogenase. This is Hydrogenase maturation factor HypA from Azotobacter chroococcum mcd 1.